We begin with the raw amino-acid sequence, 206 residues long: Large ribosomal subunit protein uL4 (206 aa).

This sequence belongs to the universal ribosomal protein uL4 family. In terms of assembly, part of the 50S ribosomal subunit.

Its function is as follows. One of the primary rRNA binding proteins, this protein initially binds near the 5'-end of the 23S rRNA. It is important during the early stages of 50S assembly. It makes multiple contacts with different domains of the 23S rRNA in the assembled 50S subunit and ribosome. In terms of biological role, forms part of the polypeptide exit tunnel. This chain is Large ribosomal subunit protein uL4, found in Bradyrhizobium sp. (strain ORS 278).